The sequence spans 2151 residues: Calpain-type cysteine protease DEK1 (2151 aa).

The signal sequence occupies residues 1–32 (MEGDERGVLLACVISGTLFTVFGSGSFWILWA). Residues 33 to 69 (VNWRPWRLYSWIFARKWPKVLQGPQLDILCGVLSLFA) are Extracellular-facing. A helical transmembrane segment spans residues 70–90 (WIVVVSPIAILIGWGSWLIVI). Residues 91-94 (LDRH) lie on the Cytoplasmic side of the membrane. A helical transmembrane segment spans residues 95–115 (IIGLAIIMAGTALLLAFYSIM). At 116–126 (LWWRTQWQSSR) the chain is on the extracellular side. A helical membrane pass occupies residues 127 to 147 (AVALLLLLGVALLCAYELCAV). Over 148-163 (YVTAGAHASQQYSPSG) the chain is Cytoplasmic. A helical transmembrane segment spans residues 164 to 184 (FFFGVSAIALAINMLFICRMV). The Extracellular portion of the chain corresponds to 185 to 235 (FNGNGLDVDEYVRRAYKFAYSDCIEVGPVACLPEPPDPNELYPRQTSRASH). The chain crosses the membrane as a helical span at residues 236 to 256 (LGLLYLGSLVVLLAYSVLYGL). The Cytoplasmic segment spans residues 257-263 (TARESRW). Residues 264–284 (LGGITSAAVIVLDWNIGACLY) traverse the membrane as a helical segment. The Extracellular segment spans residues 285 to 293 (GFKLLQNRV). A helical transmembrane segment spans residues 294–314 (LALFVAGISRLFLICFGIHYW). Over 315-319 (YLGHC) the chain is Cytoplasmic. The chain crosses the membrane as a helical span at residues 320–340 (ISYIFVASVLSGAAVSRHLSI). Over 341-615 (TDPSAARRDA…LLLHHVAGTP (275 aa)) the chain is Extracellular. Disordered stretches follow at residues 363 to 393 (RRKEQNSSSSSSDGCGSSIKRSSSIDAGHTG) and 405 to 442 (CTADNLTRTGSSQEGINSDKSEESGRPSLGLRSSSCRS). Residues 369-388 (SSSSSSDGCGSSIKRSSSID) show a composition bias toward low complexity. Polar residues predominate over residues 405–420 (CTADNLTRTGSSQEGI). The segment covering 430-442 (RPSLGLRSSSCRS) has biased composition (low complexity). The chain crosses the membrane as a helical span at residues 616 to 636 (ERAWGLFSLVFILETIIVAIF). The Cytoplasmic segment spans residues 637 to 652 (RPKTITIINSSHQQFE). The chain crosses the membrane as a helical span at residues 653–673 (FGFSVLLLSPVVCSIMAFLRS). Over 674–686 (LQVEEMALTSKSR) the chain is Extracellular. Residues 687-707 (KYGFVAWLLSTSVGLSLSFLS) traverse the membrane as a helical segment. At 708-711 (KSSV) the chain is on the cytoplasmic side. Residues 712 to 732 (LLGISLTVPLMAACLSIAVPI) form a helical membrane-spanning segment. At 733 to 760 (WMHNGYQFWVPQLSCGDQARDLRSPRIK) the chain is on the extracellular side. The helical transmembrane segment at 761–782 (GFILWICVVLFAGSVISLGAII) threads the bilayer. At 783–813 (SAKPLDDLKYKLFSARENNVTSPYTSSVYLG) the chain is on the cytoplasmic side. Residues 814–834 (WAMSSGIALVVTAILPIVSWF) traverse the membrane as a helical segment. Residues 835–844 (ATYRFSHSSA) lie on the Extracellular side of the membrane. The chain crosses the membrane as a helical span at residues 845 to 865 (VCLMIFSVVLVAFCGTSYLEV). Over 866-878 (VKSRDDQLPTKGD) the chain is Cytoplasmic. The chain crosses the membrane as a helical span at residues 879–899 (FLAALLPLACIPALLSLCCGM). The Extracellular portion of the chain corresponds to 900 to 912 (VKWKDDCWILSRG). A helical transmembrane segment spans residues 913 to 933 (VYVFFSIGLLLLFGAIAAVIA). The Cytoplasmic segment spans residues 934-936 (VKP). A helical transmembrane segment spans residues 937 to 957 (WTIGVSFLLVLFLMVVTIGVI). Over 958–971 (HLWASNNFYLTRKQ) the chain is Extracellular. Residues 972 to 992 (TSFVCFLALLLGLAAFLLGWH) form a helical membrane-spanning segment. The Cytoplasmic segment spans residues 993–1006 (QDKAFAGASVGYFT). The helical transmembrane segment at 1007 to 1027 (FLSLLAGRALAVLLSPPIVVY) threads the bilayer. Over 1028–1050 (SPRVLPVYVYDAHADCGKNVSAA) the chain is Extracellular. A helical membrane pass occupies residues 1051 to 1071 (FLVLYGIALATEGWGVVASLI). The Cytoplasmic segment spans residues 1072–2151 (IYPPFAGAAV…TKASIVLEAL (1080 aa)). Calpain catalytic domains lie at 1407-1600 (SGKH…DMID) and 1695-1997 (QFTD…CRVY). Active-site residues include C1761, H1919, and N1939.

It belongs to the peptidase C2 family. Autocatalytic proteolytic cleavage leading to the production of mainly cytoplasmic localized subproducts of about 85 and 120 kDa. In terms of tissue distribution, mostly expressed in meristems and organ primordia. Expressed at low levels in young and germinating seeds at 10 ppm and in seedling roots at 67 ppm. Present in most tissues at a low level.

It is found in the cell membrane. It localises to the endosome membrane. The protein localises to the endoplasmic reticulum membrane. The protein resides in the cytoplasm. In terms of biological role, essential protease involved in epiderm development. Required for aleurone cell development in the endosperm probably by maintaining and restricting the aleurone and embryonic epidermal L1 cell-layer fates as well as meristems organization. Involved in the maintenance of adaxial/abaxial axis information in developing leaves, probably by regulating cell proliferation and expansion. Does not need calcium ions to be active. Required for the formation of giant cells in sepals by determining cell fate and promoting endoreplication. This Arabidopsis thaliana (Mouse-ear cress) protein is Calpain-type cysteine protease DEK1.